We begin with the raw amino-acid sequence, 94 residues long: Exodeoxyribonuclease 7 small subunit (94 aa).

Belongs to the XseB family. As to quaternary structure, heterooligomer composed of large and small subunits.

The protein resides in the cytoplasm. It carries out the reaction Exonucleolytic cleavage in either 5'- to 3'- or 3'- to 5'-direction to yield nucleoside 5'-phosphates.. Bidirectionally degrades single-stranded DNA into large acid-insoluble oligonucleotides, which are then degraded further into small acid-soluble oligonucleotides. The chain is Exodeoxyribonuclease 7 small subunit from Trichormus variabilis (strain ATCC 29413 / PCC 7937) (Anabaena variabilis).